The sequence spans 179 residues: Early E3 20.1 kDa glycoprotein (179 aa).

5 N-linked (GlcNAc...) asparagine; by host glycosylation sites follow: asparagine 29, asparagine 57, asparagine 70, asparagine 75, and asparagine 123.

It belongs to the adenoviridae E3_20 family.

In terms of biological role, E3 proteins seem to be dispensable for virus growth in tissue culture cells. They are potentially important for virus growth under special conditions; E3 region may help adenoviruses to evade the immune surveillance of the host. The protein is Early E3 20.1 kDa glycoprotein of Homo sapiens (Human).